A 123-amino-acid chain; its full sequence is MIQVQTILSVADNSGARLVMCIKVLGGSRRRYAKISDIIKIAVKEAIPRAKVKKGEVLKAVIVRTKKNLHRSDGSVLRFDKNACVLLNDSTEQPIGTRIFGPVTRELRTEKFMKIISLAPEVL.

Belongs to the universal ribosomal protein uL14 family. Part of the 50S ribosomal subunit. Forms a cluster with proteins L3 and L19. In the 70S ribosome, L14 and L19 interact and together make contacts with the 16S rRNA in bridges B5 and B8.

In terms of biological role, binds to 23S rRNA. Forms part of two intersubunit bridges in the 70S ribosome. The polypeptide is Large ribosomal subunit protein uL14 (Wigglesworthia glossinidia brevipalpis).